Consider the following 552-residue polypeptide: Thermosome subunit beta (552 aa).

Belongs to the TCP-1 chaperonin family. In terms of assembly, forms a Heterooligomeric complex of two stacked nine-membered rings; one of alpha and the other of beta subunits. In terms of processing, the N-terminus is blocked.

Functionally, molecular chaperone; binds unfolded polypeptides in vitro, and has a weak ATPase activity. The sequence is that of Thermosome subunit beta (thsB) from Sulfurisphaera tokodaii (strain DSM 16993 / JCM 10545 / NBRC 100140 / 7) (Sulfolobus tokodaii).